The primary structure comprises 891 residues: Mating-type protein A-alpha Z3 (891 aa).

A DNA-binding region (homeobox; TALE-type) is located at residues E111–H189. The segment covering A331–R360 has biased composition (basic and acidic residues). Disordered regions lie at residues A331–D592, Y606–T671, S779–S812, and P836–T861. Composition is skewed to acidic residues over residues S369–D400 and A427–T457. Composition is skewed to low complexity over residues P542 to T559 and S612 to S650. Residues T651–S660 show a composition bias toward polar residues. A compositionally biased stretch (basic and acidic residues) spans R841–A850.

The protein belongs to the TALE/M-ATYP homeobox family.

It localises to the nucleus. Specifies A-alpha-3 mating-type. May regulate the expression of genes specific to the homokaryotic cell type. This chain is Mating-type protein A-alpha Z3, found in Schizophyllum commune (Split gill fungus).